The sequence spans 192 residues: UPF0149 protein YPO0911/y3298/YP_3608 (192 aa).

It belongs to the UPF0149 family.

The protein is UPF0149 protein YPO0911/y3298/YP_3608 of Yersinia pestis.